Reading from the N-terminus, the 325-residue chain is Bifunctional nuclease 1 (325 aa).

The BFN domain occupies 117–252; the sequence is CVHNNPQGGH…YLAYSDGMRV (136 aa). One can recognise a UVR domain in the interval 284 to 318; it reads TKEFNILSKMMQAVDEERYDEAAEWRDKLGQFRAK.

It belongs to the bifunctional nuclease family.

It is found in the nucleus. In terms of biological role, bifunctional nuclease with both RNase and DNase activities. Involved in basal defense response. Participates in abscisic acid-derived callose deposition following infection by a necrotrophic pathogen. This is Bifunctional nuclease 1 (BBD1) from Arabidopsis thaliana (Mouse-ear cress).